A 478-amino-acid polypeptide reads, in one-letter code: E3 ubiquitin-protein ligase makorin-1 (478 aa).

3 C3H1-type zinc fingers span residues 51 to 78 (WTKQVTCRYFMHGVCKKGNNCRYSHDLS), 80 to 107 (SQSAMVCRYYQRGCCAYGDRCRYEHTKP), and 204 to 231 (EMKKQLCPYAAVGECRYGENCVYLHGDA). The interval 232–259 (CDMCGLQVLHPVDAAQRSQHIKSCIEAH) is makorin-type Cys-His. The segment at 277 to 331 (CGICMEVVYEKANPSERRFGILSNCNHTYCLKCIRKWRSAKQFESKIIKSCPECR) adopts an RING-type zinc-finger fold. Residues 360-389 (AMSNKPCRYFDEGRGSCPFGGNCFYKHAYP) form a C3H1-type 4 zinc finger.

As to quaternary structure, interacts with p53/TP53 and CDKN1A. Interacts with TERT, modulating telomere length homeostasis. Auto-ubiquitinated; which leads to proteasomal degradation.

It carries out the reaction S-ubiquitinyl-[E2 ubiquitin-conjugating enzyme]-L-cysteine + [acceptor protein]-L-lysine = [E2 ubiquitin-conjugating enzyme]-L-cysteine + N(6)-ubiquitinyl-[acceptor protein]-L-lysine.. It participates in protein modification; protein ubiquitination. Functionally, E3 ubiquitin ligase catalyzing the covalent attachment of ubiquitin moieties onto substrate proteins. These substrates include FILIP1, p53/TP53, CDKN1A and TERT. Keeps cells alive by suppressing p53/TP53 under normal conditions, but stimulates apoptosis by repressing CDKN1A under stress conditions. Acts as a negative regulator of telomerase. Has negative and positive effects on RNA polymerase II-dependent transcription. In Notamacropus eugenii (Tammar wallaby), this protein is E3 ubiquitin-protein ligase makorin-1 (MKRN1).